Reading from the N-terminus, the 465-residue chain is Ribosome biogenesis protein YTM1 (465 aa).

A ubiquitin-like (UBL) domain region spans residues alanine 18 to arginine 99. 7 WD repeats span residues leucine 111–serine 153, glycine 160–threonine 198, glycine 205–valine 242, glycine 277–threonine 317, threonine 319–serine 358, glycine 364–aspartate 404, and glycine 427–alanine 465. A disordered region spans residues lysine 235–leucine 272.

The protein belongs to the WD repeat WDR12/YTM1 family. In terms of assembly, component of the NOP7 complex, composed of ERB1, NOP7 and YTM1. The complex is held together by ERB1, which interacts with NOP7 via its N-terminal domain and with YTM1 via a high-affinity interaction between the seven-bladed beta-propeller domains of the 2 proteins. The NOP7 complex associates with the 66S pre-ribosome. Interacts (via UBL domain) with MDN1 (via VWFA/MIDAS domain).

It is found in the nucleus. Its subcellular location is the nucleolus. It localises to the nucleoplasm. In terms of biological role, component of the NOP7 complex, which is required for maturation of the 25S and 5.8S ribosomal RNAs and formation of the 60S ribosome. This chain is Ribosome biogenesis protein YTM1, found in Coccidioides immitis (strain RS) (Valley fever fungus).